We begin with the raw amino-acid sequence, 259 residues long: ATP synthase subunit b 2 (259 aa).

Residues 5 to 27 (WFTVSAQAINFLILVALLKRFLY) form a helical membrane-spanning segment.

Belongs to the ATPase B chain family. In terms of assembly, F-type ATPases have 2 components, F(1) - the catalytic core - and F(0) - the membrane proton channel. F(1) has five subunits: alpha(3), beta(3), gamma(1), delta(1), epsilon(1). F(0) has three main subunits: a(1), b(2) and c(10-14). The alpha and beta chains form an alternating ring which encloses part of the gamma chain. F(1) is attached to F(0) by a central stalk formed by the gamma and epsilon chains, while a peripheral stalk is formed by the delta and b chains.

The protein resides in the cell inner membrane. In terms of biological role, f(1)F(0) ATP synthase produces ATP from ADP in the presence of a proton or sodium gradient. F-type ATPases consist of two structural domains, F(1) containing the extramembraneous catalytic core and F(0) containing the membrane proton channel, linked together by a central stalk and a peripheral stalk. During catalysis, ATP synthesis in the catalytic domain of F(1) is coupled via a rotary mechanism of the central stalk subunits to proton translocation. Component of the F(0) channel, it forms part of the peripheral stalk, linking F(1) to F(0). This Syntrophotalea carbinolica (strain DSM 2380 / NBRC 103641 / GraBd1) (Pelobacter carbinolicus) protein is ATP synthase subunit b 2.